Consider the following 141-residue polypeptide: Transcriptional regulator MraZ (141 aa).

SpoVT-AbrB domains are found at residues 5–47 (TFNI…KPQD) and 76–119 (ANFV…DKKL).

It belongs to the MraZ family. In terms of assembly, homooctamer. Forms a ring.

The protein resides in the cytoplasm. The protein localises to the nucleoid. This chain is Transcriptional regulator MraZ, found in Mycoplasma pneumoniae (strain ATCC 29342 / M129 / Subtype 1) (Mycoplasmoides pneumoniae).